Here is a 1403-residue protein sequence, read N- to C-terminus: DNA-directed RNA polymerase subunit beta' (1403 aa).

Residues Cys71, Cys73, Cys86, and Cys89 each contribute to the Zn(2+) site. Positions 462, 464, and 466 each coordinate Mg(2+). The Zn(2+) site is built by Cys820, Cys893, Cys900, and Cys903.

It belongs to the RNA polymerase beta' chain family. As to quaternary structure, the RNAP catalytic core consists of 2 alpha, 1 beta, 1 beta' and 1 omega subunit. When a sigma factor is associated with the core the holoenzyme is formed, which can initiate transcription. Mg(2+) serves as cofactor. Zn(2+) is required as a cofactor.

The catalysed reaction is RNA(n) + a ribonucleoside 5'-triphosphate = RNA(n+1) + diphosphate. Functionally, DNA-dependent RNA polymerase catalyzes the transcription of DNA into RNA using the four ribonucleoside triphosphates as substrates. This is DNA-directed RNA polymerase subunit beta' from Methylobacterium radiotolerans (strain ATCC 27329 / DSM 1819 / JCM 2831 / NBRC 15690 / NCIMB 10815 / 0-1).